Consider the following 172-residue polypeptide: Neudesin (172 aa).

The N-terminal stretch at 1–31 (MVGPAPRRRLRPLAALALVLALAPGLPTARA) is a signal peptide. A Cytochrome b5 heme-binding domain is found at 44–129 (VRLFTEEELA…KELEALDEVF (86 aa)). Lysine 136 carries the N6-acetyllysine modification. The tract at residues 151 to 172 (DGSPNLDFKPEDQPHFDIKDEF) is disordered. Basic and acidic residues predominate over residues 158 to 172 (FKPEDQPHFDIKDEF).

The protein belongs to the cytochrome b5 family. MAPR subfamily. Interacts with PINK1 and PARK7. Ubiquitously expressed with high expression in heart. Over-expressed in various tumors including carcinomas of the uterine cervix, lymphoma, colon, lung, skin and leukemia, as well as carcinoma of the breast.

It localises to the secreted. The protein localises to the extracellular space. The protein resides in the mitochondrion. Its subcellular location is the endoplasmic reticulum. Its function is as follows. Acts as a neurotrophic factor in postnatal mature neurons enhancing neuronal survival. Promotes cell proliferation and neurogenesis in undifferentiated neural progenitor cells at the embryonic stage and inhibits differentiation of astrocytes. Its neurotrophic activity is exerted via MAPK1/ERK2, MAPK3/ERK1 and AKT1/AKT pathways. Neurotrophic activity is enhanced by binding to heme. Also acts as an anorexigenic neurotrophic factor that contributes to energy balance. The polypeptide is Neudesin (Homo sapiens (Human)).